The chain runs to 1334 residues: DNA-directed RNA polymerase subunit beta' (1334 aa).

The Zn(2+) site is built by cysteine 213, cysteine 284, cysteine 291, and cysteine 294. Over residues 1299-1308 (SSRGSSRFSR) the composition is skewed to low complexity. Residues 1299-1334 (SSRGSSRFSRQPISDRWSEADEEGEEDDFEEDYEEE) form a disordered region. Acidic residues predominate over residues 1318-1334 (ADEEGEEDDFEEDYEEE).

The protein belongs to the RNA polymerase beta' chain family. RpoC2 subfamily. In cyanobacteria the RNAP catalytic core is composed of 2 alpha, 1 beta, 1 beta', 1 gamma and 1 omega subunit. When a sigma factor is associated with the core the holoenzyme is formed, which can initiate transcription. The cofactor is Zn(2+).

It carries out the reaction RNA(n) + a ribonucleoside 5'-triphosphate = RNA(n+1) + diphosphate. Its function is as follows. DNA-dependent RNA polymerase catalyzes the transcription of DNA into RNA using the four ribonucleoside triphosphates as substrates. The sequence is that of DNA-directed RNA polymerase subunit beta' from Microcystis aeruginosa (strain NIES-843 / IAM M-2473).